Consider the following 346-residue polypeptide: Probable disease resistance protein At5g45440 (346 aa).

The NB-ARC domain maps to 38–116 (KQVEDRVETD…AYAPRIWVSM (79 aa)). 85–92 (GEYGVGKT) provides a ligand contact to ATP. A disordered region spans residues 315–346 (FDDGKANQNGSKDGKTDSVDNPNSEESKTKPL).

In terms of biological role, possible disease resistance protein. The protein is Probable disease resistance protein At5g45440 of Arabidopsis thaliana (Mouse-ear cress).